We begin with the raw amino-acid sequence, 122 residues long: Photosystem II extrinsic protein U (122 aa).

The first 30 residues, 1–30 (MRWLLSILVRVVLVLCLCFAPLGIPVVARA), serve as a signal peptide directing secretion.

It belongs to the PsbU family. PSII is composed of 1 copy each of membrane proteins PsbA, PsbB, PsbC, PsbD, PsbE, PsbF, PsbH, PsbI, PsbJ, PsbK, PsbL, PsbM, PsbT, PsbX, PsbY, PsbZ, Psb30/Ycf12, peripheral proteins PsbO, CyanoQ (PsbQ), PsbU, PsbV and a large number of cofactors. It forms dimeric complexes.

Its subcellular location is the cellular thylakoid membrane. Functionally, one of the extrinsic, lumenal subunits of photosystem II (PSII). PSII is a light-driven water plastoquinone oxidoreductase, using light energy to abstract electrons from H(2)O, generating a proton gradient subsequently used for ATP formation. The extrinsic proteins stabilize the structure of photosystem II oxygen-evolving complex (OEC), the ion environment of oxygen evolution and protect the OEC against heat-induced inactivation. This is Photosystem II extrinsic protein U from Synechococcus sp. (strain JA-2-3B'a(2-13)) (Cyanobacteria bacterium Yellowstone B-Prime).